The following is a 359-amino-acid chain: N-acetyl-gamma-glutamyl-phosphate reductase (359 aa).

C162 is an active-site residue.

Belongs to the NAGSA dehydrogenase family. Type 1 subfamily.

Its subcellular location is the cytoplasm. The enzyme catalyses N-acetyl-L-glutamate 5-semialdehyde + phosphate + NADP(+) = N-acetyl-L-glutamyl 5-phosphate + NADPH + H(+). It functions in the pathway amino-acid biosynthesis; L-arginine biosynthesis; N(2)-acetyl-L-ornithine from L-glutamate: step 3/4. Functionally, catalyzes the NADPH-dependent reduction of N-acetyl-5-glutamyl phosphate to yield N-acetyl-L-glutamate 5-semialdehyde. This is N-acetyl-gamma-glutamyl-phosphate reductase from Prochlorococcus marinus (strain NATL1A).